A 463-amino-acid polypeptide reads, in one-letter code: ATP synthase subunit beta (463 aa).

151–158 is a binding site for ATP; it reads GGAGVGKT.

It belongs to the ATPase alpha/beta chains family. F-type ATPases have 2 components, CF(1) - the catalytic core - and CF(0) - the membrane proton channel. CF(1) has five subunits: alpha(3), beta(3), gamma(1), delta(1), epsilon(1). CF(0) has three main subunits: a(1), b(2) and c(9-12). The alpha and beta chains form an alternating ring which encloses part of the gamma chain. CF(1) is attached to CF(0) by a central stalk formed by the gamma and epsilon chains, while a peripheral stalk is formed by the delta and b chains.

It localises to the cell membrane. The catalysed reaction is ATP + H2O + 4 H(+)(in) = ADP + phosphate + 5 H(+)(out). Functionally, produces ATP from ADP in the presence of a proton gradient across the membrane. The catalytic sites are hosted primarily by the beta subunits. The polypeptide is ATP synthase subunit beta (Clostridium botulinum (strain Loch Maree / Type A3)).